The following is a 341-amino-acid chain: L-threonine 3-dehydrogenase (341 aa).

Residue C38 coordinates Zn(2+). Residues T40 and H43 each act as charge relay system in the active site. Residues H63, E64, C93, C96, C99, and C107 each coordinate Zn(2+). Residues I175, D195, R200, 262-264 (LGI), and 286-287 (IY) each bind NAD(+).

The protein belongs to the zinc-containing alcohol dehydrogenase family. Homotetramer. Requires Zn(2+) as cofactor.

The protein localises to the cytoplasm. It carries out the reaction L-threonine + NAD(+) = (2S)-2-amino-3-oxobutanoate + NADH + H(+). It participates in amino-acid degradation; L-threonine degradation via oxydo-reductase pathway; glycine from L-threonine: step 1/2. Its function is as follows. Catalyzes the NAD(+)-dependent oxidation of L-threonine to 2-amino-3-ketobutyrate. This chain is L-threonine 3-dehydrogenase, found in Solibacter usitatus (strain Ellin6076).